Reading from the N-terminus, the 373-residue chain is P2Y purinoceptor 2 (373 aa).

At 1–32 (MAADLEPWNSTINGTWEGDELGYKCRFNEDFK) the chain is on the extracellular side. N-linked (GlcNAc...) asparagine glycans are attached at residues Asn-9 and Asn-13. Residues 33–59 (YVLLPVSYGVVCVLGLCLNVVALYIFL) form a helical membrane-spanning segment. The Cytoplasmic portion of the chain corresponds to 60-70 (CRLKTWNASTT). Residues 71–93 (YMFHLAVSDSLYAASLPLLVYYY) traverse the membrane as a helical segment. At 94–110 (ARGDHWPFSTVLCKLVR) the chain is on the extracellular side. Cys-106 and Cys-183 are oxidised to a cystine. Residues 111 to 129 (FLFYTNLYCSILFLTCISV) traverse the membrane as a helical segment. Residues 130-152 (HRCLGVLRPLHSLRWGRARYARR) lie on the Cytoplasmic side of the membrane. A helical transmembrane segment spans residues 153-172 (VAAVVWVLVLACQAPVLYFV). Over 173-194 (TTSVRGTRITCHDTSARELFSH) the chain is Extracellular. Residues 195–220 (FVAYSSVMLGLLFAVPFSVILVCYVL) traverse the membrane as a helical segment. The Cytoplasmic segment spans residues 221–246 (MARRLLKPAYGTTGGLPRAKRKSVRT). Residues 247-269 (IALVLAVFALCFLPFHVTRTLYY) form a helical membrane-spanning segment. Topologically, residues 270-287 (SFRSLDLSCHTLNAINMA) are extracellular. A helical transmembrane segment spans residues 288–309 (YKITRPLASANSCLDPVLYFLA). Residues 310-373 (GQRLVRFARD…AGSETKDIRL (64 aa)) are Cytoplasmic-facing. The disordered stretch occupies residues 318–373 (RDAKPPTEPTPSPQARRKLGLHRPNRTVRKDLSVSSDDSRRTESTPAGSETKDIRL). The segment covering 332 to 344 (ARRKLGLHRPNRT) has biased composition (basic residues). A compositionally biased stretch (basic and acidic residues) spans 345-360 (VRKDLSVSSDDSRRTE).

Belongs to the G-protein coupled receptor 1 family. Spleen, testis, kidney, liver, lung, heart and brain.

It is found in the cell membrane. Functionally, receptor for ATP and UTP coupled to G-proteins that activate a phosphatidylinositol-calcium second messenger system. The affinity range is UTP = ATP &gt; ATP-gamma-S &gt;&gt; 2-methylthio-ATP = ADP. The polypeptide is P2Y purinoceptor 2 (P2ry2) (Mus musculus (Mouse)).